A 101-amino-acid polypeptide reads, in one-letter code: Ascorbate-specific PTS system EIIB component (101 aa).

The 94-residue stretch at 3–96 folds into the PTS EIIB type-2 domain; it reads VRILAVCGNG…KLLEVIKEHF (94 aa). Cys-9 serves as the catalytic Phosphocysteine intermediate. Cys-9 is subject to Phosphocysteine.

The protein localises to the cytoplasm. The catalysed reaction is N(pros)-phospho-L-histidyl-[protein] + L-ascorbate(out) = L-ascorbate 6-phosphate(in) + L-histidyl-[protein]. Its function is as follows. The phosphoenolpyruvate-dependent sugar phosphotransferase system (sugar PTS), a major carbohydrate active transport system, catalyzes the phosphorylation of incoming sugar substrates concomitantly with their translocation across the cell membrane. The enzyme II UlaABC PTS system is involved in ascorbate transport. The polypeptide is Ascorbate-specific PTS system EIIB component (ulaB) (Salmonella choleraesuis (strain SC-B67)).